The primary structure comprises 434 residues: Glutamyl-tRNA reductase (434 aa).

Residues 49 to 52 (TCNR), Ser109, 114 to 116 (EPQ), and Gln120 contribute to the substrate site. The active-site Nucleophile is the Cys50. NADP(+) is bound at residue 189–194 (GAGEMC).

Belongs to the glutamyl-tRNA reductase family. As to quaternary structure, homodimer.

It catalyses the reaction (S)-4-amino-5-oxopentanoate + tRNA(Glu) + NADP(+) = L-glutamyl-tRNA(Glu) + NADPH + H(+). The protein operates within porphyrin-containing compound metabolism; protoporphyrin-IX biosynthesis; 5-aminolevulinate from L-glutamyl-tRNA(Glu): step 1/2. In terms of biological role, catalyzes the NADPH-dependent reduction of glutamyl-tRNA(Glu) to glutamate 1-semialdehyde (GSA). The protein is Glutamyl-tRNA reductase of Trichlorobacter lovleyi (strain ATCC BAA-1151 / DSM 17278 / SZ) (Geobacter lovleyi).